Reading from the N-terminus, the 138-residue chain is Small ribosomal subunit protein uS8 (138 aa).

Belongs to the universal ribosomal protein uS8 family. Part of the 30S ribosomal subunit. Contacts proteins S5 and S12.

Functionally, one of the primary rRNA binding proteins, it binds directly to 16S rRNA central domain where it helps coordinate assembly of the platform of the 30S subunit. The chain is Small ribosomal subunit protein uS8 (rpsH) from Thermus thermophilus (strain ATCC BAA-163 / DSM 7039 / HB27).